The following is a 360-amino-acid chain: Catabolic L-serine/threonine dehydratase (360 aa).

S2 is subject to N-acetylserine. At K37 the chain carries N6-(pyridoxal phosphate)lysine.

Belongs to the serine/threonine dehydratase family. Requires pyridoxal 5'-phosphate as cofactor.

It localises to the mitochondrion. It catalyses the reaction L-serine = pyruvate + NH4(+). The enzyme catalyses L-threonine = 2-oxobutanoate + NH4(+). The polypeptide is Catabolic L-serine/threonine dehydratase (CHA1) (Saccharomyces cerevisiae (strain ATCC 204508 / S288c) (Baker's yeast)).